The chain runs to 205 residues: Small ribosomal subunit protein uS4 (205 aa).

The 64-residue stretch at 95-158 folds into the S4 RNA-binding domain; sequence SRLDNIVYRM…TKSPLVKNFI (64 aa).

It belongs to the universal ribosomal protein uS4 family. Part of the 30S ribosomal subunit. Contacts protein S5. The interaction surface between S4 and S5 is involved in control of translational fidelity.

Functionally, one of the primary rRNA binding proteins, it binds directly to 16S rRNA where it nucleates assembly of the body of the 30S subunit. Its function is as follows. With S5 and S12 plays an important role in translational accuracy. This chain is Small ribosomal subunit protein uS4, found in Mycoplasma genitalium (strain ATCC 33530 / DSM 19775 / NCTC 10195 / G37) (Mycoplasmoides genitalium).